The primary structure comprises 322 residues: Cytochrome c biogenesis protein CcsA (322 aa).

8 helical membrane-spanning segments follow: residues 15 to 35, 45 to 65, 72 to 92, 98 to 120, 144 to 164, 226 to 246, 253 to 273, and 287 to 307; these read FSIVSIIITMRLISFFLVDGI, GMIVTFLCLTGLLVTRWTYSG, LYESLIFLSWSFSLIHIVPYF, YLSTITGSSVVFTQGFTTSGLLT, MILGYASLLCGSLLSIALLVI, GISLGFIFLTIGILSGAVWAN, WNWDPKETWAFITWIIFAIYL, and AIVASIGFLIIWICYFGVNLL.

The protein belongs to the CcmF/CycK/Ccl1/NrfE/CcsA family. As to quaternary structure, may interact with Ccs1.

The protein resides in the plastid. Its subcellular location is the chloroplast thylakoid membrane. Functionally, required during biogenesis of c-type cytochromes (cytochrome c6 and cytochrome f) at the step of heme attachment. In Coffea arabica (Arabian coffee), this protein is Cytochrome c biogenesis protein CcsA.